The following is a 296-amino-acid chain: Ribosomal RNA small subunit methyltransferase H (296 aa).

S-adenosyl-L-methionine-binding positions include 38 to 40 (GAH), E57, F80, D103, and H110.

It belongs to the methyltransferase superfamily. RsmH family.

The protein localises to the cytoplasm. It catalyses the reaction cytidine(1402) in 16S rRNA + S-adenosyl-L-methionine = N(4)-methylcytidine(1402) in 16S rRNA + S-adenosyl-L-homocysteine + H(+). Specifically methylates the N4 position of cytidine in position 1402 (C1402) of 16S rRNA. The protein is Ribosomal RNA small subunit methyltransferase H of Borrelia garinii subsp. bavariensis (strain ATCC BAA-2496 / DSM 23469 / PBi) (Borreliella bavariensis).